The sequence spans 932 residues: Isoleucine--tRNA ligase (932 aa).

Residues 58-68 carry the 'HIGH' region motif; that stretch reads PYANGDIHIGH. E559 contributes to the L-isoleucyl-5'-AMP binding site. Residues 600 to 604 carry the 'KMSKS' region motif; sequence KMSKS. K603 is a binding site for ATP. Zn(2+)-binding residues include C895, C898, C915, and C918.

It belongs to the class-I aminoacyl-tRNA synthetase family. IleS type 1 subfamily. In terms of assembly, monomer. The cofactor is Zn(2+).

Its subcellular location is the cytoplasm. It carries out the reaction tRNA(Ile) + L-isoleucine + ATP = L-isoleucyl-tRNA(Ile) + AMP + diphosphate. Its function is as follows. Catalyzes the attachment of isoleucine to tRNA(Ile). As IleRS can inadvertently accommodate and process structurally similar amino acids such as valine, to avoid such errors it has two additional distinct tRNA(Ile)-dependent editing activities. One activity is designated as 'pretransfer' editing and involves the hydrolysis of activated Val-AMP. The other activity is designated 'posttransfer' editing and involves deacylation of mischarged Val-tRNA(Ile). The sequence is that of Isoleucine--tRNA ligase from Saccharophagus degradans (strain 2-40 / ATCC 43961 / DSM 17024).